The following is a 285-amino-acid chain: Bifunctional protein FolD (285 aa).

NADP(+) contacts are provided by residues 166-168 (GAS) and Ile232.

This sequence belongs to the tetrahydrofolate dehydrogenase/cyclohydrolase family. Homodimer.

The enzyme catalyses (6R)-5,10-methylene-5,6,7,8-tetrahydrofolate + NADP(+) = (6R)-5,10-methenyltetrahydrofolate + NADPH. It carries out the reaction (6R)-5,10-methenyltetrahydrofolate + H2O = (6R)-10-formyltetrahydrofolate + H(+). It functions in the pathway one-carbon metabolism; tetrahydrofolate interconversion. Functionally, catalyzes the oxidation of 5,10-methylenetetrahydrofolate to 5,10-methenyltetrahydrofolate and then the hydrolysis of 5,10-methenyltetrahydrofolate to 10-formyltetrahydrofolate. In Baumannia cicadellinicola subsp. Homalodisca coagulata, this protein is Bifunctional protein FolD.